We begin with the raw amino-acid sequence, 426 residues long: Histidine--tRNA ligase (426 aa).

Belongs to the class-II aminoacyl-tRNA synthetase family.

The protein resides in the cytoplasm. The enzyme catalyses tRNA(His) + L-histidine + ATP = L-histidyl-tRNA(His) + AMP + diphosphate + H(+). This is Histidine--tRNA ligase from Saccharolobus islandicus (strain Y.N.15.51 / Yellowstone #2) (Sulfolobus islandicus).